A 244-amino-acid polypeptide reads, in one-letter code: E3 ubiquitin-protein ligase RNF166 (244 aa).

Residues 10-30 (AQRPQAPGPGPPRPPPPAGPA) are disordered. The span at 15–28 (APGPGPPRPPPPAG) shows a compositional bias: pro residues. The RING-type zinc-finger motif lies at 40–80 (CPICLEVFHRAVGIAGCGHTFCGECLQPCLQVPSPLCPLCR). Zn(2+)-binding residues include C105, C108, H120, and C124. Residues 105–124 (CRGCSKKVTLAKMRSHVSSC) form a C2HC RNF-type zinc finger. The UIM domain maps to 228–244 (DEEAALQAALALSLSEN).

Its subcellular location is the cytoplasm. It catalyses the reaction S-ubiquitinyl-[E2 ubiquitin-conjugating enzyme]-L-cysteine + [acceptor protein]-L-lysine = [E2 ubiquitin-conjugating enzyme]-L-cysteine + N(6)-ubiquitinyl-[acceptor protein]-L-lysine.. The protein operates within protein modification; protein ubiquitination. E3 ubiquitin-protein ligase that promotes the ubiquitination of different substrates. The sequence is that of E3 ubiquitin-protein ligase RNF166 (RNF166) from Gallus gallus (Chicken).